The sequence spans 337 residues: MRVQDVYNVIYTHTEGEPLCIIYSGVPYPAGSTILEKRAFLEENYDWLRKALMREPRGHADMFGVFLTPPSSRDYDAGLIYIDGKEYSHMCGHGTIAVAMAMVANGLVARDPSGLTRIRFETTAGLVVAEVAHEGDRVLWTRFENVPAYVAAQDIAFELPGYGPLKADLVWGGNYFGIIDLRGTSLRIAPENGSELSRMGLIAREEIRKKVKVQHPTEAHINNLNFVTFWHEPTIEGCLYKNVHVFSAGQLDRSPGGTGTSAMMAYFEARGVIGLNQPITSEGLLGSGTFEGCLIGETTLGTVRAVRPTVKGTAGMLGTASWTINREDPVDAGFLVL.

Cys91 (proton acceptor) is an active-site residue. Substrate contacts are provided by residues 92 to 93 (GH), Asp252, and 257 to 258 (GT).

This sequence belongs to the proline racemase family.

The catalysed reaction is trans-4-hydroxy-L-proline = cis-4-hydroxy-D-proline. Its function is as follows. Catalyzes the epimerization of trans-4-hydroxy-L-proline (t4LHyp) to cis-4-hydroxy-D-proline (c4DHyp). Is involved in a degradation pathway that converts t4LHyp to alpha-ketoglutarate, which allows R.sphaeroides to grow on t4LHyp as a sole carbon source. Displays no proline racemase activity. The protein is 4-hydroxyproline 2-epimerase of Cereibacter sphaeroides (strain ATCC 17023 / DSM 158 / JCM 6121 / CCUG 31486 / LMG 2827 / NBRC 12203 / NCIMB 8253 / ATH 2.4.1.) (Rhodobacter sphaeroides).